The primary structure comprises 164 residues: Cyclic pyranopterin monophosphate synthase (164 aa).

Residues 75–77 (MCH) and 116–117 (ME) contribute to the substrate site. Residue aspartate 131 is part of the active site.

Belongs to the MoaC family. Homohexamer; trimer of dimers.

It catalyses the reaction (8S)-3',8-cyclo-7,8-dihydroguanosine 5'-triphosphate = cyclic pyranopterin phosphate + diphosphate. It functions in the pathway cofactor biosynthesis; molybdopterin biosynthesis. Functionally, catalyzes the conversion of (8S)-3',8-cyclo-7,8-dihydroguanosine 5'-triphosphate to cyclic pyranopterin monophosphate (cPMP). In Staphylococcus aureus (strain MSSA476), this protein is Cyclic pyranopterin monophosphate synthase.